The primary structure comprises 359 residues: Mitochondrial glutathione transporter SLC25A39 (359 aa).

At 1–14 the chain is on the mitochondrial intermembrane side; it reads MADQDPGGISPLQQ. 3 Solcar repeats span residues 9–151, 159–243, and 253–347; these read ISPL…LKAF, SDLY…VKSW, and TSVG…GKNF. A helical membrane pass occupies residues 15–35; the sequence is MVASGAGAVVTSLFMTPLDVV. At 36 to 121 the chain is on the mitochondrial matrix side; it reads KVRLQSQRPS…VKIVRHEGTR (86 aa). 4 residues coordinate [2Fe-2S] cluster: Cys74, Cys78, Cys88, and Cys94. Residues 122–142 traverse the membrane as a helical segment; the sequence is TLWSGLPATLVMTVPATAAYF. The Mitochondrial intermembrane segment spans residues 143–164; sequence TAYDQLKAFLCGRALTSDLYAP. Residues 165 to 185 form a helical membrane-spanning segment; it reads MVAGALARLGTVTVISPLELV. At 186 to 214 the chain is on the mitochondrial matrix side; that stretch reads RTKLQAQHLSYRELGTCVRAAVAQGGWRS. Residues 215–235 form a helical membrane-spanning segment; the sequence is LWLGWGPTALRDVPFSALYWF. Over 236-255 the chain is Mitochondrial intermembrane; it reads NYELVKSWLSGLRPKDQTSV. The helical transmembrane segment at 256–276 threads the bilayer; sequence GISFVAGGISGMVAATLTLPF. The Mitochondrial matrix segment spans residues 277-317; the sequence is DVVKTQRQVALGAVEALRVMPLNTDSTWLLLRRILAESGTR. Residues 318 to 338 form a helical membrane-spanning segment; sequence GLFAGFLPRIIKAAPSCAIMI. Topologically, residues 339–359 are mitochondrial intermembrane; the sequence is STYEFGKNFFQRLNREQLLSP.

This sequence belongs to the mitochondrial carrier (TC 2.A.29) family. In terms of processing, cleaved and degraded by AFG3L2; degradation by AFG3L2 is regulated by the ability of SLC25A39 to bind iron-sulfur. In absence of mitochondrial glutathione, SLC25A39 binds iron-sulfur, preventing cleavage and degradation by AFG3L2. The presence of mitochondrial glutathione prevents iron-sulfur-binding to SLC25A39, promoting cleavage and degradation by AFG3L2.

It is found in the mitochondrion inner membrane. It catalyses the reaction glutathione(in) = glutathione(out). The activity of SLC25A39 is regulated by levels of mitochondrial glutathione via its ability to bind [2Fe-2S] iron-sulfur cluster. Upon physiological levels of mitochondrial glutathione, glutathione prevents iron-sulfur-binding to SLC25A39 promoting cleavage and degradation by AFG3L2. Upon depletion of mitochondrial glutathione, SLC25A39 binds iron-sulfur, preventing cleavage and degradation by AFG3L2. Its function is as follows. Mitochondrial transporter required for glutathione import into mitochondria. Glutathione, which plays key roles in oxidative metabolism, is produced exclusively in the cytosol and is imported in many organelles. Mitochondrial glutathione is required for the activity and stability of proteins containing iron-sulfur clusters, as well as erythropoiesis. This chain is Mitochondrial glutathione transporter SLC25A39 (SLC25A39), found in Bos taurus (Bovine).